The primary structure comprises 126 residues: Small ribosomal subunit protein uS13c (126 aa).

Positions 100 to 126 (GQRTRTNARTRRGARQTVAGKKKAPSK) are disordered. Positions 101-126 (QRTRTNARTRRGARQTVAGKKKAPSK) are enriched in basic residues.

The protein belongs to the universal ribosomal protein uS13 family. As to quaternary structure, part of the 30S ribosomal subunit.

The protein resides in the plastid. The protein localises to the cyanelle. In terms of biological role, located at the top of the head of the 30S subunit, it contacts several helices of the 16S rRNA. The polypeptide is Small ribosomal subunit protein uS13c (Cyanophora paradoxa).